Reading from the N-terminus, the 562-residue chain is Arginine--tRNA ligase (562 aa).

Positions 129–139 match the 'HIGH' region motif; sequence ANPTGPLHVGH.

It belongs to the class-I aminoacyl-tRNA synthetase family. Monomer.

The protein localises to the cytoplasm. It carries out the reaction tRNA(Arg) + L-arginine + ATP = L-arginyl-tRNA(Arg) + AMP + diphosphate. This is Arginine--tRNA ligase from Xylella fastidiosa (strain M12).